We begin with the raw amino-acid sequence, 323 residues long: Mycothiol acetyltransferase (323 aa).

1D-myo-inositol 2-(L-cysteinylamino)-2-deoxy-alpha-D-glucopyranoside is bound at residue glutamate 44. Acetyl-CoA is bound at residue 98-100 (LAV). The 151-residue stretch at 173–323 (VSLRAFIPGQ…DVMYGPKNGG (151 aa)) folds into the N-acetyltransferase domain. Residues glutamate 200, lysine 240, and glutamate 253 each contribute to the 1D-myo-inositol 2-(L-cysteinylamino)-2-deoxy-alpha-D-glucopyranoside site. Residues 257–259 (VGV) and 264–270 (QGMGLGK) each bind acetyl-CoA. Tyrosine 291 serves as a coordination point for 1D-myo-inositol 2-(L-cysteinylamino)-2-deoxy-alpha-D-glucopyranoside.

This sequence belongs to the acetyltransferase family. MshD subfamily. Monomer.

The catalysed reaction is 1D-myo-inositol 2-(L-cysteinylamino)-2-deoxy-alpha-D-glucopyranoside + acetyl-CoA = mycothiol + CoA + H(+). Catalyzes the transfer of acetyl from acetyl-CoA to desacetylmycothiol (Cys-GlcN-Ins) to form mycothiol. This chain is Mycothiol acetyltransferase, found in Arthrobacter sp. (strain FB24).